The chain runs to 2242 residues: Transcription factor sma-9 (2242 aa).

Positions 120 to 383 form a coiled coil; that stretch reads HQLAQQQAQQ…QQAQQAQLAQ (264 aa). The segment covering 317–330 has biased composition (low complexity); sequence AAQQAQAQNNASQQ. Disordered stretches follow at residues 317–344, 494–553, 583–617, 712–754, and 1323–1349; these read AAQQAQAQNNASQQRPSVASTPALSSTP, TPVA…SMSD, GAQSSVDHDSNSGGSTRTSPGPKDSRMLQAASRSQ, LAAH…SSFP, and EDSTSAEPSTSGQSLLMRSPRPQSPPL. A compositionally biased stretch (polar residues) spans 331–344; sequence RPSVASTPALSSTP. 2 stretches are compositionally biased toward low complexity: residues 494–523 and 539–550; these read TPVAVPPMKQNSNPSMNPSSTSTSASATSS and SSSKAASSGNES. The segment covering 583 to 601 has biased composition (polar residues); sequence GAQSSVDHDSNSGGSTRTS. Residues 1324 to 1338 are compositionally biased toward polar residues; it reads DSTSAEPSTSGQSLL. 5 consecutive C2H2-type zinc fingers follow at residues 1447-1469, 1475-1499, 1700-1722, 1734-1760, and 1790-1814; these read YICDRCGIRCKKPSMLKKHIKSH, FNCTACNFSFKTKGNLTKHLSSKTH, LKCDQCDRTFRKISDLTLHQHTH, YQCSECKIPIRTKAQLQKHLERNHGVH, and FMCVDCDIGFRKHGILAKHLRSKTH. Residues 2029-2039 are compositionally biased toward low complexity; sequence SITSPIVSSST. 2 disordered regions span residues 2029 to 2059 and 2085 to 2107; these read SITSPIVSSSTNFSYRKRSESSLSGSSPTHT and STDKAHASESLSDRLHNKRPRPI. Positions 2085–2099 are enriched in basic and acidic residues; sequence STDKAHASESLSDRL. C2H2-type zinc fingers lie at residues 2111-2134 and 2143-2167; these read TKCQICADEFSTPIELQVHLHVDH and YKCPRKFCGLNYESLDSLRAHVTAH. The disordered stretch occupies residues 2219-2242; the sequence is HELYAQTQQGAGSSTSNQSPKAAN. Over residues 2223-2242 the composition is skewed to polar residues; it reads AQTQQGAGSSTSNQSPKAAN.

In terms of tissue distribution, expressed in the ventral nerve cord (VNC), pharynx, intestine and seam cells (at protein level).

It localises to the nucleus. Transcription factor, probably acting as a transcriptional activator and repressor, involved in the TGF-beta-like dbl-1 signaling pathway. Plays a role in regulation of body size, and patterning of male-specific genital sensilla (simple sense organs), known as rays, and mating-associated structures, spicules. Required for the dorsoventral patterning of the postembryonic mesodermal lineage (M lineage), acting by antagonizing the TGF-beta-like dbl-1 signaling pathway, in part by repressing expression of transcription factor unc-130. Involved in egg-laying, perhaps via modulation of cholinergic neurotransmission. Involved in production of reactive oxygen species (ROS), acting downstream of the dbl-1 signaling pathway. Plays a role in the mitochondrial unfolded protein response (mtUPR). May play a role in modulating lifespan and in responses to proteotoxic stress. Its function is as follows. Transcription factor, probably acting as a transcriptional activator. Required for patterning of male-specific genital sensilla (simple sense organs), known as rays. Dispensable for regulation of body size. The protein is Transcription factor sma-9 of Caenorhabditis elegans.